Here is a 398-residue protein sequence, read N- to C-terminus: 1-deoxy-D-xylulose 5-phosphate reductoisomerase (398 aa).

Threonine 10, glycine 11, serine 12, isoleucine 13, glycine 36, lysine 37, asparagine 38, and asparagine 124 together coordinate NADPH. Lysine 125 is a 1-deoxy-D-xylulose 5-phosphate binding site. Glutamate 126 is an NADPH binding site. Aspartate 150 contacts Mn(2+). 1-deoxy-D-xylulose 5-phosphate contacts are provided by serine 151, glutamate 152, serine 186, and histidine 209. A Mn(2+)-binding site is contributed by glutamate 152. An NADPH-binding site is contributed by glycine 215. Serine 222, asparagine 227, lysine 228, and glutamate 231 together coordinate 1-deoxy-D-xylulose 5-phosphate. Position 231 (glutamate 231) interacts with Mn(2+).

This sequence belongs to the DXR family. Homodimer. It depends on Mg(2+) as a cofactor. Requires Mn(2+) as cofactor.

The enzyme catalyses 2-C-methyl-D-erythritol 4-phosphate + NADP(+) = 1-deoxy-D-xylulose 5-phosphate + NADPH + H(+). The protein operates within isoprenoid biosynthesis; isopentenyl diphosphate biosynthesis via DXP pathway; isopentenyl diphosphate from 1-deoxy-D-xylulose 5-phosphate: step 1/6. Its function is as follows. Catalyzes the NADPH-dependent rearrangement and reduction of 1-deoxy-D-xylulose-5-phosphate (DXP) to 2-C-methyl-D-erythritol 4-phosphate (MEP). The chain is 1-deoxy-D-xylulose 5-phosphate reductoisomerase from Salmonella choleraesuis (strain SC-B67).